We begin with the raw amino-acid sequence, 404 residues long: Chorismate synthase (404 aa).

2 residues coordinate NADP(+): R40 and R46. Residues 136-138, 257-258, G301, 316-320, and R342 each bind FMN; these read RAS, QA, and KPIST.

It belongs to the chorismate synthase family. In terms of assembly, homotetramer. The cofactor is FMNH2.

It carries out the reaction 5-O-(1-carboxyvinyl)-3-phosphoshikimate = chorismate + phosphate. It participates in metabolic intermediate biosynthesis; chorismate biosynthesis; chorismate from D-erythrose 4-phosphate and phosphoenolpyruvate: step 7/7. Its function is as follows. Catalyzes the anti-1,4-elimination of the C-3 phosphate and the C-6 proR hydrogen from 5-enolpyruvylshikimate-3-phosphate (EPSP) to yield chorismate, which is the branch point compound that serves as the starting substrate for the three terminal pathways of aromatic amino acid biosynthesis. This reaction introduces a second double bond into the aromatic ring system. The protein is Chorismate synthase of Mycolicibacterium vanbaalenii (strain DSM 7251 / JCM 13017 / BCRC 16820 / KCTC 9966 / NRRL B-24157 / PYR-1) (Mycobacterium vanbaalenii).